Consider the following 523-residue polypeptide: Alanine aminotransferase 2 (523 aa).

A disordered region spans residues 1 to 25 (MQRAAALVRRGCGPRTPSSWGRSQS). Pyridoxal 5'-phosphate contacts are provided by alanine 187, serine 188, tyrosine 216, asparagine 271, and serine 338. N6-(pyridoxal phosphate)lysine is present on lysine 341. Arginine 350 lines the pyridoxal 5'-phosphate pocket. N6-acetyllysine occurs at positions 415, 505, and 512.

The protein belongs to the class-I pyridoxal-phosphate-dependent aminotransferase family. Alanine aminotransferase subfamily. In terms of assembly, homodimer. Pyridoxal 5'-phosphate serves as cofactor. Expressed at high levels in muscle, adipose tissue, kidney and brain and at lower levels in the liver and breast.

The enzyme catalyses L-alanine + 2-oxoglutarate = pyruvate + L-glutamate. The protein operates within amino-acid degradation; L-alanine degradation via transaminase pathway; pyruvate from L-alanine: step 1/1. Its function is as follows. Catalyzes the reversible transamination between alanine and 2-oxoglutarate to form pyruvate and glutamate. This Homo sapiens (Human) protein is Alanine aminotransferase 2 (GPT2).